We begin with the raw amino-acid sequence, 429 residues long: Serine hydroxymethyltransferase (429 aa).

(6S)-5,6,7,8-tetrahydrofolate is bound at residue 120-122 (GHI). N6-(pyridoxal phosphate)lysine is present on Lys-226.

The protein belongs to the SHMT family. Homodimer. Pyridoxal 5'-phosphate serves as cofactor.

The protein resides in the cytoplasm. It carries out the reaction 5,10-methylenetetrahydromethanopterin + glycine + H2O = 5,6,7,8-tetrahydromethanopterin + L-serine. It catalyses the reaction L-allo-threonine = acetaldehyde + glycine. The protein operates within amino-acid biosynthesis; glycine biosynthesis; glycine from L-serine: step 1/1. In terms of biological role, catalyzes the reversible interconversion of serine and glycine with tetrahydromethanopterin (H4MPT) serving as the one-carbon carrier. The use of tetrahydrofolate (THF or H4PteGlu) as the pteridine substrate is 450-fold less efficient than that of H4MPT. Also exhibits a pteridine-independent aldolase activity toward beta-hydroxyamino acids, producing glycine and aldehydes, via a retro-aldol mechanism. Thus, is able to catalyze the cleavage of L-allo-threonine and L-threo-beta-phenylserine. The chain is Serine hydroxymethyltransferase from Methanocaldococcus jannaschii (strain ATCC 43067 / DSM 2661 / JAL-1 / JCM 10045 / NBRC 100440) (Methanococcus jannaschii).